Here is a 339-residue protein sequence, read N- to C-terminus: tRNA pseudouridine synthase D (339 aa).

D80 functions as the Nucleophile in the catalytic mechanism. Residues 155-311 (GFPNYFTEQR…AKGFSWAFEP (157 aa)) form the TRUD domain.

This sequence belongs to the pseudouridine synthase TruD family.

It carries out the reaction uridine(13) in tRNA = pseudouridine(13) in tRNA. In terms of biological role, responsible for synthesis of pseudouridine from uracil-13 in transfer RNAs. In Haemophilus influenzae (strain 86-028NP), this protein is tRNA pseudouridine synthase D.